Consider the following 1057-residue polypeptide: Probable E3 ubiquitin-protein ligase HERC4 (1057 aa).

7 RCC1 repeats span residues 1–51 (MLCW…FVLD), 52–101 (DGTV…ALND), 102–154 (KGQV…ALSK), 156–207 (SEVF…VLTL), 208–259 (SGAI…ALTK), 261–311 (GGVF…AFVP), and 313–366 (SGRI…CVKR). Residues 730 to 1057 (KNIDYKKPLK…IDHNEGFSLI (328 aa)) enclose the HECT domain. Catalysis depends on Cys-1025, which acts as the Glycyl thioester intermediate.

The protein resides in the cytoplasm. It localises to the cytosol. It carries out the reaction S-ubiquitinyl-[E2 ubiquitin-conjugating enzyme]-L-cysteine + [acceptor protein]-L-lysine = [E2 ubiquitin-conjugating enzyme]-L-cysteine + N(6)-ubiquitinyl-[acceptor protein]-L-lysine.. It participates in protein modification; protein ubiquitination. Probable E3 ubiquitin-protein ligase involved in either protein trafficking or in the distribution of cellular structures. Required for spermatozoon maturation and fertility, and for the removal of the cytoplasmic droplet of the spermatozoon. E3 ubiquitin-protein ligases accept ubiquitin from an E2 ubiquitin-conjugating enzyme in the form of a thioester and then directly transfer it to targeted substrates. This chain is Probable E3 ubiquitin-protein ligase HERC4 (Herc4), found in Rattus norvegicus (Rat).